The sequence spans 95 residues: Beta-defensin 132 (95 aa).

An N-terminal signal peptide occupies residues 1–22 (MKFLLLVLAALRFLTQVIPASA). Cystine bridges form between cysteine 27-cysteine 55, cysteine 35-cysteine 49, and cysteine 39-cysteine 56. Positions 72–95 (GNHWQSRRRNTQRKDKKQQTTVTS) are disordered. Over residues 76–87 (QSRRRNTQRKDK) the composition is skewed to basic residues.

It belongs to the beta-defensin family.

Its subcellular location is the secreted. Functionally, has antibacterial activity. The polypeptide is Beta-defensin 132 (DEFB132) (Pongo pygmaeus (Bornean orangutan)).